A 59-amino-acid polypeptide reads, in one-letter code: Large ribosomal subunit protein uL30 (59 aa).

It belongs to the universal ribosomal protein uL30 family. In terms of assembly, part of the 50S ribosomal subunit.

This Enterococcus faecalis (strain ATCC 700802 / V583) protein is Large ribosomal subunit protein uL30.